Here is a 220-residue protein sequence, read N- to C-terminus: HTH-type transcriptional repressor GlaR (220 aa).

The HTH gntR-type domain occupies 1–69 (MTITSLDGYR…NQKGYRVASM (69 aa)). The segment at residues 29–48 (MSLLTSRYALGVGPLREALS) is a DNA-binding region (H-T-H motif).

It is found in the cytoplasm. The repressive effect at the glaH promoter site is specifically relieved upon glutarate binding. Functionally, negatively regulates the expression of the glaH-lhgD-gabDTP operon in a temporal manner during entry into stationary phase or during the first few hours of carbon starvation. Thereby is involved in the regulation of a L-lysine degradation pathway that proceeds via cadaverine, glutarate and L-2-hydroxyglutarate. Binds to two primary and two secondary sites in the promoter region of the glaH operon with the consensus sequences TTGTN5TTTT and ATGTN5TTTT of the primary sites, each separated by six nucleotides. The chain is HTH-type transcriptional repressor GlaR from Escherichia coli (strain K12).